A 495-amino-acid polypeptide reads, in one-letter code: UDP-glycosyltransferase 73C10 (495 aa).

Residue His24 is the Proton acceptor of the active site. His24 serves as a coordination point for an anthocyanidin. Catalysis depends on Asp129, which acts as the Charge relay. 6 residues coordinate UDP-alpha-D-glucose: Gln358, His373, Trp376, Asn377, Ser378, and Glu381. Gly396 contacts an anthocyanidin. Residues Asp397 and Gln398 each coordinate UDP-alpha-D-glucose.

This sequence belongs to the UDP-glycosyltransferase family.

It carries out the reaction oleanolate + UDP-alpha-D-glucose = oleanolate 3-O-beta-D-glucoside + UDP + H(+). In terms of biological role, catalyzes the transfer of a glucose (Glc) moiety from UDP-Glc to the C-3 position of the oleanane sapogenins oleanolate and hederagenin, and to the C-28 carboxylic group of the lupane sapogenin betulinate. The monoglucosylated hederagenin 3-O-beta-D-glucoside is a feeding deterrent of the yellow-striped flea beetle (Phyllotreta nemorum). This Barbarea vulgaris (Yellow rocket) protein is UDP-glycosyltransferase 73C10.